A 133-amino-acid polypeptide reads, in one-letter code: uncharacterized protein (133 aa).

Residues 1–22 (MYRSSISIQVFICVLFLPLDSG) form the signal peptide. N-linked (GlcNAc...) asparagine glycosylation is present at N111.

The protein localises to the secreted. This is an uncharacterized protein from Saccharomyces cerevisiae (strain ATCC 204508 / S288c) (Baker's yeast).